Consider the following 349-residue polypeptide: Putative nuclease HARBI1 (349 aa).

Residues Asp-149, Asp-199, Asp-225, and Glu-261 each contribute to the a divalent metal cation site. Residues 149–300 form the DDE Tnp4 domain; it reads DCIHVAIKAP…IILACCVLHN (152 aa).

This sequence belongs to the HARBI1 family. Interacts with NAIF1. Requires a divalent metal cation as cofactor. In terms of tissue distribution, detected in adult brain, eye, nerve tissue and lung. Detected in embryo.

It localises to the nucleus. It is found in the cytoplasm. Transposase-derived protein that may have nuclease activity (Potential). Does not have transposase activity. The sequence is that of Putative nuclease HARBI1 (Harbi1) from Mus musculus (Mouse).